We begin with the raw amino-acid sequence, 90 residues long: uncharacterized protein (90 aa).

The helical transmembrane segment at Ile32–Phe52 threads the bilayer.

Its subcellular location is the membrane. This is an uncharacterized protein from Schizosaccharomyces pombe (strain 972 / ATCC 24843) (Fission yeast).